Reading from the N-terminus, the 1623-residue chain is RING finger protein 17 (1623 aa).

Residues 1-22 (MAAEASKTGPSRSSYQRMGRKS) form a disordered region. The RING-type zinc finger occupies 32-75 (CTRCGRRVSRSSGHHCELQCGHAFCELCLLMTEECTTIICPDCE). Lysine 234 is subject to N6-acetyllysine. Tudor domains lie at 726–784 (CPVQ…FLNA), 962–1021 (KWEN…LKTM), and 1228–1285 (FWKK…PDIP). The interval 1438-1462 (NQSNQHSDTDDSGVSGESESESLDE) is disordered. The 61-residue stretch at 1479–1539 (DFRTEMPCLA…CQIPSHLMRY (61 aa)) folds into the Tudor 4 domain.

Interacts with MXD1, MXD3, MXD4, MXI1 and PIWIL1. Self-associates. Testis specific.

It localises to the cytoplasm. The protein localises to the nucleus. Seems to be involved in regulation of transcriptional activity of MYC. In vitro, inhibits DNA-binding activity of Mad-MAX heterodimers. Can recruit Mad transcriptional repressors (MXD1, MXD3, MXD4 and MXI1) to the cytoplasm. May be involved in spermiogenesis. The chain is RING finger protein 17 (RNF17) from Homo sapiens (Human).